A 414-amino-acid polypeptide reads, in one-letter code: Serine hydroxymethyltransferase (414 aa).

Residues L121 and 125–127 (GHL) contribute to the (6S)-5,6,7,8-tetrahydrofolate site. K229 bears the N6-(pyridoxal phosphate)lysine mark.

This sequence belongs to the SHMT family. Homodimer. The cofactor is pyridoxal 5'-phosphate.

The protein localises to the cytoplasm. It catalyses the reaction (6R)-5,10-methylene-5,6,7,8-tetrahydrofolate + glycine + H2O = (6S)-5,6,7,8-tetrahydrofolate + L-serine. The protein operates within one-carbon metabolism; tetrahydrofolate interconversion. Its pathway is amino-acid biosynthesis; glycine biosynthesis; glycine from L-serine: step 1/1. Catalyzes the reversible interconversion of serine and glycine with tetrahydrofolate (THF) serving as the one-carbon carrier. This reaction serves as the major source of one-carbon groups required for the biosynthesis of purines, thymidylate, methionine, and other important biomolecules. Also exhibits THF-independent aldolase activity toward beta-hydroxyamino acids, producing glycine and aldehydes, via a retro-aldol mechanism. The polypeptide is Serine hydroxymethyltransferase (Verminephrobacter eiseniae (strain EF01-2)).